A 248-amino-acid polypeptide reads, in one-letter code: Probable transcriptional regulatory protein Oter_1471 (248 aa).

The protein belongs to the TACO1 family.

It localises to the cytoplasm. The protein is Probable transcriptional regulatory protein Oter_1471 of Opitutus terrae (strain DSM 11246 / JCM 15787 / PB90-1).